The chain runs to 288 residues: Disulfide-bond oxidoreductase YghU (288 aa).

Residues asparagine 26, 52 to 54 (TPN), glutamine 87, isoleucine 101, 117 to 118 (ES), glutamine 151, and arginine 178 contribute to the glutathione site. A GST N-terminal domain is found at 46–133 (QLYSLGTPNG…YLAEKFGYFL (88 aa)). Residues 139-265 (KRTETMNWLF…RIVNRTNGPL (127 aa)) form the GST C-terminal domain. A disordered region spans residues 260–288 (RTNGPLNEQLHERHDASDFETNTEDKRQG). Positions 268–288 (QLHERHDASDFETNTEDKRQG) are enriched in basic and acidic residues.

It belongs to the GST superfamily. Nu-class GSH transferase family. In terms of assembly, homodimer.

Functionally, exhibits a robust glutathione (GSH)-dependent disulfide-bond reductase activity toward the model substrate, 2-hydroxyethyl disulfide; the actual physiological substrates are not known. Also displays a modest GSH-dependent peroxidase activity toward several organic hydroperoxides, such as cumene hydroperoxide and linoleic acid 13(S)-hydroperoxide, but does not reduce H(2)O(2) or tert-butyl hydroperoxide at appreciable rates. Exhibits little or no GSH transferase activity with most typical electrophilic substrates, and has no detectable transferase activity toward 1-chloro-2,4-dinitrobenzene (CDNB) with glutathionylspermidine (GspSH) as the nucleophilic substrate. The sequence is that of Disulfide-bond oxidoreductase YghU (yghU) from Escherichia coli (strain K12).